A 265-amino-acid chain; its full sequence is Glutamate racemase (265 aa).

Residues 7 to 8 (DS) and 39 to 40 (YG) contribute to the substrate site. C70 (proton donor/acceptor) is an active-site residue. 71–72 (NT) contacts substrate. C177 (proton donor/acceptor) is an active-site residue.

Belongs to the aspartate/glutamate racemases family.

The enzyme catalyses L-glutamate = D-glutamate. Its pathway is cell wall biogenesis; peptidoglycan biosynthesis. Its function is as follows. Provides the (R)-glutamate required for cell wall biosynthesis. In Prochlorococcus marinus (strain NATL2A), this protein is Glutamate racemase.